The primary structure comprises 548 residues: Serine/threonine-protein phosphatase 2A 56 kDa regulatory subunit delta 1 isoform (548 aa).

Positions 1-10 are enriched in basic residues; the sequence is MKGIKSKMLS. Residues 1 to 75 are disordered; sequence MKGIKSKMLS…KKVPIDTTPT (75 aa). Over residues 27 to 39 the composition is skewed to basic and acidic residues; it reads KKSNSHDSSKAPK. A Phosphotyrosine modification is found at Tyr96. Phosphoserine occurs at positions 99, 109, and 542.

The protein belongs to the phosphatase 2A regulatory subunit B family. PP2A consists of a common heterodimeric core enzyme, composed of a 36 kDa catalytic subunit (subunit C) and a 65 kDa constant regulatory subunit (PR65 or subunit A), that associates with a variety of regulatory subunits. Proteins that associate with the core dimer include three families of regulatory subunits B (the R2/B/PR55/B55, R3/B''/PR72/PR130/PR59 and R5/B'/B56 families), the 48 kDa variable regulatory subunit, viral proteins, and cell signaling molecules.

It is found in the cytoplasm. Its subcellular location is the nucleus. Its function is as follows. The B regulatory subunit might modulate substrate selectivity and catalytic activity, and might also direct the localization of the catalytic enzyme to a particular subcellular compartment. Has a role in cell shape control and septum formation. The sequence is that of Serine/threonine-protein phosphatase 2A 56 kDa regulatory subunit delta 1 isoform (par1) from Schizosaccharomyces pombe (strain 972 / ATCC 24843) (Fission yeast).